The following is a 452-amino-acid chain: Exoglucanase 1 (452 aa).

Residues 1–18 (MFSKFALTGSLLAGAVNA) form the signal peptide. An N-linked (GlcNAc...) asparagine glycan is attached at asparagine 75. The active-site Nucleophile is the glutamate 230. Glutamate 235 serves as the catalytic Proton donor. Residues asparagine 335 and asparagine 360 are each glycosylated (N-linked (GlcNAc...) asparagine).

It belongs to the glycosyl hydrolase 7 (cellulase C) family.

The enzyme catalyses Hydrolysis of (1-&gt;4)-beta-D-glucosidic linkages in cellulose and cellotetraose, releasing cellobiose from the non-reducing ends of the chains.. In terms of biological role, the biological conversion of cellulose to glucose generally requires three types of hydrolytic enzymes: (1) Endoglucanases which cut internal beta-1,4-glucosidic bonds; (2) Exocellobiohydrolases that cut the disaccharide cellobiose from the non-reducing end of the cellulose polymer chain; (3) Beta-1,4-glucosidases which hydrolyze the cellobiose and other short cello-oligosaccharides to glucose. This chain is Exoglucanase 1 (CBH-1), found in Cryphonectria parasitica (Chestnut blight fungus).